A 1500-amino-acid chain; its full sequence is Rho GTPase-activating protein 35 (1500 aa).

The has GTPase activity, required for proper localization stretch occupies residues 1-266 (MMMARKQDVR…IPYFEALKQQ (266 aa)). Residues lysine 28, 33–37 (IGKSC), leucine 52, serine 56, 95–97 (EQT), 201–203 (KCD), and 229–231 (SAR) each bind GTP. 4 consecutive FF domains span residues 270 to 327 (IATA…HIHR), 368 to 422 (KLLE…HLEK), 429 to 483 (RAEM…HQKQ), and 485 to 550 (IDKA…HIHF). Residue tyrosine 308 is modified to Phosphotyrosine. Serine 589 is modified (phosphoserine). A pG1 pseudoGTPase domain is found at 592 to 767 (DPNIDRINLV…LLDSKRNLNL (176 aa)). Residues serine 770 and serine 773 each carry the phosphoserine modification. One can recognise a pG2 pseudoGTPase domain in the interval 783 to 947 (RIVMCLMCGD…FKDVVDKKNI (165 aa)). A phosphoserine mark is found at serine 970, serine 975, serine 985, serine 1002, and serine 1073. Residues 970–989 (SPRAGSPLCNSNLQDSEEDI) form a disordered region. The segment at 1058-1090 (SYLDQGHRDGQRKSVSSSTWLPPDGFDPSDYAE) is disordered. Position 1088 is a phosphotyrosine (tyrosine 1088). The residue at position 1106 (tyrosine 1106) is a Phosphotyrosine; by ABL2 and PTK6. A compositionally biased stretch (polar residues) spans 1125–1142 (KAQSNGSGNGSDSEMDTS). The disordered stretch occupies residues 1125 to 1147 (KAQSNGSGNGSDSEMDTSSLERG). Phosphoserine occurs at positions 1135, 1143, 1151, 1177, 1180, and 1222. The disordered stretch occupies residues 1178-1208 (VGSDDELGPIRKKEEDQASQGYKGDNAVIPY). The required for phospholipid binding and regulation of the substrate preference stretch occupies residues 1214 to 1237 (PRRRNILRSLRRNTKKPKPKPRPS). Threonine 1227 carries the phosphothreonine modification. Residue serine 1237 is modified to Phosphoserine. The Rho-GAP domain occupies 1250 to 1437 (VPLTTVVTPE…LFIQQCPFFF (188 aa)). A disordered region spans residues 1444–1500 (EPPGATPSSPSAVASTVPFLTSTPVTSQPSPPQSPPPTPQSPMQALLPSQLQAEHTL). The span at 1449–1471 (TPSSPSAVASTVPFLTSTPVTSQ) shows a compositional bias: low complexity. Positions 1472-1483 (PSPPQSPPPTPQ) are enriched in pro residues. A phosphoserine mark is found at serine 1473 and serine 1477. Threonine 1481 carries the post-translational modification Phosphothreonine. At serine 1484 the chain carries Phosphoserine. Residues 1490–1500 (LPSQLQAEHTL) show a composition bias toward polar residues.

As to quaternary structure, interacts with RASA1. Interacts with the general transcription factor GTF2I, the interaction sequesters GTF2I in the cytoplasm. Post-translationally, phosphorylation of Tyr-1106 by PTK6 promotes the association with RASA1, inactivating RHOA while activating RAS. Phosphorylation at Tyr-308 by PDGFRA inhibits binding to GTF2I. Phosphorylated by PRKCA at Ser-1222 and Thr-1227, induces relocalization from the cytoplasm to regions of plasma membrane ruffling and prevents the binding and substrate specificity regulation by phospholipids. In brain, phosphorylated by FYN and SRC. During focal adhesion formation, phosphorylated by MAPK1 and MAPK3 at the C-terminal region, probably at Ser-1452, Ser-1477, Thr-1481 and Ser-1484. Phosphorylation by MAPK1 and MAPK3 inhibits GAP function and localizes ARGHAP35 away from newly forming focal adhesions and stress fibers in cells spreading on fibronectin. Phosphorylation at Ser-1477 and Thr-1481 by GSK3B requires priming by MAPK and inhibits RhoGAP activity and modulates polarized cell migration. As to expression, strongly expressed in retina (photoreceptor layer) and brain. Expression is maximal in the occipital, frontal, temporal lobe and also the cerebellum. Medium expression in the medulla and also in kidney, lung, liver, heart and spleen.

It is found in the cytoplasm. The protein localises to the cytoskeleton. It localises to the cilium basal body. The protein resides in the nucleus. Its subcellular location is the cell membrane. Rho GTPase-activating protein (GAP). Binds several acidic phospholipids which inhibits the Rho GAP activity to promote the Rac GAP activity. This binding is inhibited by phosphorylation by PRKCA. Involved in cell differentiation as well as cell adhesion and migration, plays an important role in retinal tissue morphogenesis, neural tube fusion, midline fusion of the cerebral hemispheres and mammary gland branching morphogenesis. Transduces signals from p21-ras to the nucleus, acting via the ras GTPase-activating protein (GAP). Transduces SRC-dependent signals from cell-surface adhesion molecules, such as laminin, to promote neurite outgrowth. Regulates axon outgrowth, guidance and fasciculation. Modulates Rho GTPase-dependent F-actin polymerization, organization and assembly, is involved in polarized cell migration and in the positive regulation of ciliogenesis and cilia elongation. During mammary gland development, is required in both the epithelial and stromal compartments for ductal outgrowth. Represses transcription of the glucocorticoid receptor by binding to the cis-acting regulatory sequence 5'-GAGAAAAGAAACTGGAGAAACTC-3'; this function is however unclear and would need additional experimental evidences. In Canis lupus familiaris (Dog), this protein is Rho GTPase-activating protein 35.